Consider the following 157-residue polypeptide: Transcription antitermination protein NusB (157 aa).

This sequence belongs to the NusB family.

In terms of biological role, involved in transcription antitermination. Required for transcription of ribosomal RNA (rRNA) genes. Binds specifically to the boxA antiterminator sequence of the ribosomal RNA (rrn) operons. In Xylella fastidiosa (strain M12), this protein is Transcription antitermination protein NusB.